Here is a 216-residue protein sequence, read N- to C-terminus: Large ribosomal subunit protein uL3 (216 aa).

The tract at residues 119 to 143 (GYQGNIHKDGQSRGPMAHGSRYHRR) is disordered.

Belongs to the universal ribosomal protein uL3 family. Part of the 50S ribosomal subunit. Forms a cluster with proteins L14 and L19.

Functionally, one of the primary rRNA binding proteins, it binds directly near the 3'-end of the 23S rRNA, where it nucleates assembly of the 50S subunit. This chain is Large ribosomal subunit protein uL3, found in Levilactobacillus brevis (strain ATCC 367 / BCRC 12310 / CIP 105137 / JCM 1170 / LMG 11437 / NCIMB 947 / NCTC 947) (Lactobacillus brevis).